The following is a 223-amino-acid chain: MTEVQDLHGQDSDEGSEEVVLTPAELIERLEQAWMNEKFAPELLESKSEIVECVMEQLEHMEENLRRAKKGDLKVSIHRMEMERIRYVLSSYLRCRLMKIEKFFPHILEKEKTRPAGEPSSLSPEEFVFAKEYMDHTETHFKNVALKHMPPNLQKVDLMRAVPKPDLDSYVFLRVKERQENILVEPEADEQRDYVIDLEEGSQHLIRYKTIAPLVASGAVQLI.

Met-1 carries the post-translational modification N-acetylmethionine. Thr-2 carries the N-acetylthreonine; in DNA replication complex GINS protein SLD5, N-terminally processed modification. Residues Ser-12 and Ser-16 each carry the phosphoserine modification. Residues 166–223 (DLDSYVFLRVKERQENILVEPEADEQRDYVIDLEEGSQHLIRYKTIAPLVASGAVQLI) form an important for GINS complex assembly region.

Belongs to the GINS4/SLD5 family. In terms of assembly, component of the CMG helicase complex, a hexameric ring of related MCM2-7 subunits stabilized by CDC45 and the tetrameric GINS complex. Associated with ORC2. Interacts with HELB.

It is found in the nucleus. It localises to the chromosome. Functionally, required for initiation of chromosomal DNA replication. Core component of CDC45-MCM-GINS (CMG) helicase, the molecular machine that unwinds template DNA during replication, and around which the replisome is built. The sequence is that of DNA replication complex GINS protein SLD5 (Gins4) from Rattus norvegicus (Rat).